We begin with the raw amino-acid sequence, 809 residues long: MSEYTRQLPVVALRNMAVMPGMLIHFDVNRKVSIEAIEAAMLLNQQVLLVSQIDAETENPTADDLYRVGTIAEIKQMIKLPGNVIRVLVTGLERATLDSLVSEQPYLKAQLTSKEAELLNLTEAEEEAMVRALRDLFEVYTTENNKLNKDIIRQVEASREIEKMVEQLSIHIPMTLEDKQLLLAASDLMEQYERLCLILADEIEVMRIKRELQNKVKDKVDKNQKDYIMREQLKVIKEELGETSSVSDIMQYLEQLKELVASDEVKEKIKKEIERFQNVAGSNSESAVARGYVETLLSLPWDKVSEDFMDLAYAKEVLETEHYGLKKVKERVLDFLAVRQLTEKGDSPIICLVGPPGTGKTSIARSIAKALNKEYVRISLGGVRDEAEIRGHRRTYVGALPGRIITGLKQAKVKNPLMLLDEIDKMSSDYKGDTASAMLEVLDSEQNCNFVDHYVEIPVDLSEVMFIATANTTQTIPKPLLDRMEIIEVSSYTENEKFHIAKNHLLNKQIEKNGLKKSQISISEKALRKIISDYTREAGVRGLERKISEVCRKIARELLEQESKENQNLIKSAKNKSNNKNQSHSEVAAAVEAEEISVTTKPSKIKVTEKNITTYLGKPKFRNEIASQKDEVGIVCGLAWTSVGGTTLQIEVNSLPGKGALILTGQMGDVMKESAQLGISYIRSLSKEYKISEEYFQKNDIHIHIPEGATPKDGPSAGITMATAMLSAITGKKVHAKVAMTGEITLRGRVLPIGGLKEKLLAAKNTGIKKVLIPEKNRPDLEELEQEITEGMEVICVATMDEVLKHALV.

The Lon N-terminal domain maps to 8–203; that stretch reads LPVVALRNMA…RLCLILADEI (196 aa). ATP is bound at residue 354-361; it reads GPPGTGKT. The region spanning 629–809 is the Lon proteolytic domain; the sequence is KDEVGIVCGL…MDEVLKHALV (181 aa). Catalysis depends on residues Ser-716 and Lys-759.

It belongs to the peptidase S16 family. Homohexamer. Organized in a ring with a central cavity.

The protein resides in the cytoplasm. It carries out the reaction Hydrolysis of proteins in presence of ATP.. Functionally, ATP-dependent serine protease that mediates the selective degradation of mutant and abnormal proteins as well as certain short-lived regulatory proteins. Required for cellular homeostasis and for survival from DNA damage and developmental changes induced by stress. Degrades polypeptides processively to yield small peptide fragments that are 5 to 10 amino acids long. Binds to DNA in a double-stranded, site-specific manner. The polypeptide is Lon protease (Lachnoclostridium phytofermentans (strain ATCC 700394 / DSM 18823 / ISDg) (Clostridium phytofermentans)).